The sequence spans 443 residues: Thymidine phosphorylase (443 aa).

It belongs to the thymidine/pyrimidine-nucleoside phosphorylase family. In terms of assembly, homodimer.

The enzyme catalyses thymidine + phosphate = 2-deoxy-alpha-D-ribose 1-phosphate + thymine. It participates in pyrimidine metabolism; dTMP biosynthesis via salvage pathway; dTMP from thymine: step 1/2. The enzymes which catalyze the reversible phosphorolysis of pyrimidine nucleosides are involved in the degradation of these compounds and in their utilization as carbon and energy sources, or in the rescue of pyrimidine bases for nucleotide synthesis. This Shewanella sp. (strain MR-4) protein is Thymidine phosphorylase.